A 394-amino-acid chain; its full sequence is Elongation factor Tu 1 (394 aa).

The tr-type G domain maps to 10-204 (KPHVNVGTIG…YLDSYIPEPE (195 aa)). The segment at 19 to 26 (GHVDHGKT) is G1. 19-26 (GHVDHGKT) contributes to the GTP binding site. Residue Thr26 participates in Mg(2+) binding. Positions 60–64 (GITIN) are G2. The tract at residues 81-84 (DCPG) is G3. GTP contacts are provided by residues 81 to 85 (DCPGH) and 136 to 139 (NKCD). The tract at residues 136–139 (NKCD) is G4. Residues 174-176 (SAL) form a G5 region.

Belongs to the TRAFAC class translation factor GTPase superfamily. Classic translation factor GTPase family. EF-Tu/EF-1A subfamily. In terms of assembly, monomer.

The protein resides in the cytoplasm. The catalysed reaction is GTP + H2O = GDP + phosphate + H(+). GTP hydrolase that promotes the GTP-dependent binding of aminoacyl-tRNA to the A-site of ribosomes during protein biosynthesis. This Serratia proteamaculans (strain 568) protein is Elongation factor Tu 1.